The sequence spans 117 residues: Protein YchN (117 aa).

To M.jannaschii MJ0989. Homohexamer. The hexamer is formed by a dimer of trimers.

This chain is Protein YchN (ychN), found in Escherichia coli O157:H7.